The sequence spans 414 residues: MFDRQNTLAKTDPQLWEAIQNENKRQEDHIELIASENYTSPAVMAAQGSQLTNKYAEGYPGKRYYGGCEFIDVAEQLAIDRVKALFGAEAANVQPHCGASANQAVFLAFLKPGDTFMGMSLAEGGHLTHGMALNMSGKWFNPIAYGLDKNEEIDYEQMERLAREHKPKLIIAGASAYSKKIDFERIGKLAKEVGAIFMVDMAHYAGLVAAGVYPNPVPHADIVTSTTHKSLRGPRGGIILMKAEHEKAINFAVFPGLQGGPLMHVIAAKAVAFKEAAEPGFKDYQKQVVANAKALAETLIARGLRIVSGGTDSHVMLVDLRAKSMTGKEAERVLGEAHITCNKNGIPNDPEKPMVTSGIRLGSPAMTTRGFKEAEARQVGNFIADVLDNPNDPANIAKVRAQVAELTKRFPVYD.

(6S)-5,6,7,8-tetrahydrofolate contacts are provided by residues Leu-121 and 125-127 (GHL). At Lys-229 the chain carries N6-(pyridoxal phosphate)lysine.

This sequence belongs to the SHMT family. As to quaternary structure, homodimer. Requires pyridoxal 5'-phosphate as cofactor.

The protein resides in the cytoplasm. It catalyses the reaction (6R)-5,10-methylene-5,6,7,8-tetrahydrofolate + glycine + H2O = (6S)-5,6,7,8-tetrahydrofolate + L-serine. The protein operates within one-carbon metabolism; tetrahydrofolate interconversion. It functions in the pathway amino-acid biosynthesis; glycine biosynthesis; glycine from L-serine: step 1/1. Its function is as follows. Catalyzes the reversible interconversion of serine and glycine with tetrahydrofolate (THF) serving as the one-carbon carrier. This reaction serves as the major source of one-carbon groups required for the biosynthesis of purines, thymidylate, methionine, and other important biomolecules. Also exhibits THF-independent aldolase activity toward beta-hydroxyamino acids, producing glycine and aldehydes, via a retro-aldol mechanism. The polypeptide is Serine hydroxymethyltransferase (Polynucleobacter necessarius subsp. necessarius (strain STIR1)).